We begin with the raw amino-acid sequence, 156 residues long: Single-stranded DNA-binding protein 1 (156 aa).

One can recognise an SSB domain in the interval 1-104; the sequence is MLNRTILVGR…VVADSIQFLE (104 aa). The segment at 122–146 is disordered; it reads QTRGQSQYSNNKPVKDNPFANANCP.

As to quaternary structure, homotetramer.

This chain is Single-stranded DNA-binding protein 1 (ssb1), found in Staphylococcus aureus (strain MSSA476).